A 154-amino-acid chain; its full sequence is NADPH-dependent 7-cyano-7-deazaguanine reductase (154 aa).

C54 (thioimide intermediate) is an active-site residue. The Proton donor role is filled by D61. Substrate is bound by residues 76–78 (VES) and 95–96 (HE).

This sequence belongs to the GTP cyclohydrolase I family. QueF type 1 subfamily.

Its subcellular location is the cytoplasm. The catalysed reaction is 7-aminomethyl-7-carbaguanine + 2 NADP(+) = 7-cyano-7-deazaguanine + 2 NADPH + 3 H(+). Its pathway is tRNA modification; tRNA-queuosine biosynthesis. In terms of biological role, catalyzes the NADPH-dependent reduction of 7-cyano-7-deazaguanine (preQ0) to 7-aminomethyl-7-deazaguanine (preQ1). This Porphyromonas gingivalis (strain ATCC 33277 / DSM 20709 / CIP 103683 / JCM 12257 / NCTC 11834 / 2561) protein is NADPH-dependent 7-cyano-7-deazaguanine reductase.